A 61-amino-acid chain; its full sequence is Temporin-CDYa (61 aa).

The first 22 residues, 1-22 (MFPLKKSLLLLFFLGTINFSFC), serve as a signal peptide directing secretion. A propeptide spanning residues 23–44 (EEERNAEEERRDDPEERDVAME) is cleaved from the precursor. The residue at position 59 (L59) is a Leucine amide.

Belongs to the frog skin active peptide (FSAP) family. Temporin subfamily. In terms of tissue distribution, expressed by the skin glands.

It localises to the secreted. Antimicrobial peptide. This Rana dybowskii (Dybovsky's frog) protein is Temporin-CDYa.